The chain runs to 230 residues: Ribose-5-phosphate isomerase A (230 aa).

Substrate-binding positions include 32-35 (TGST), 85-88 (DGAD), and 98-101 (KGGG). Glutamate 107 (proton acceptor) is an active-site residue. Lysine 125 is a binding site for substrate.

The protein belongs to the ribose 5-phosphate isomerase family. Homodimer.

It catalyses the reaction aldehydo-D-ribose 5-phosphate = D-ribulose 5-phosphate. The protein operates within carbohydrate degradation; pentose phosphate pathway; D-ribose 5-phosphate from D-ribulose 5-phosphate (non-oxidative stage): step 1/1. Functionally, catalyzes the reversible conversion of ribose-5-phosphate to ribulose 5-phosphate. The protein is Ribose-5-phosphate isomerase A of Burkholderia vietnamiensis (strain G4 / LMG 22486) (Burkholderia cepacia (strain R1808)).